The following is a 381-amino-acid chain: Queuine tRNA-ribosyltransferase (381 aa).

The active-site Proton acceptor is the Asp-103. Residues 103–107 (DSGGF), Asp-157, Gln-200, and Gly-227 each bind substrate. The tract at residues 258–264 (GVGTYRE) is RNA binding. Asp-277 acts as the Nucleophile in catalysis. Residues 282 to 286 (TRLAR) are RNA binding; important for wobble base 34 recognition. Zn(2+)-binding residues include Cys-315, Cys-317, Cys-320, and His-346.

This sequence belongs to the queuine tRNA-ribosyltransferase family. In terms of assembly, homodimer. Within each dimer, one monomer is responsible for RNA recognition and catalysis, while the other monomer binds to the replacement base PreQ1. Zn(2+) is required as a cofactor.

The catalysed reaction is 7-aminomethyl-7-carbaguanine + guanosine(34) in tRNA = 7-aminomethyl-7-carbaguanosine(34) in tRNA + guanine. The protein operates within tRNA modification; tRNA-queuosine biosynthesis. In terms of biological role, catalyzes the base-exchange of a guanine (G) residue with the queuine precursor 7-aminomethyl-7-deazaguanine (PreQ1) at position 34 (anticodon wobble position) in tRNAs with GU(N) anticodons (tRNA-Asp, -Asn, -His and -Tyr). Catalysis occurs through a double-displacement mechanism. The nucleophile active site attacks the C1' of nucleotide 34 to detach the guanine base from the RNA, forming a covalent enzyme-RNA intermediate. The proton acceptor active site deprotonates the incoming PreQ1, allowing a nucleophilic attack on the C1' of the ribose to form the product. After dissociation, two additional enzymatic reactions on the tRNA convert PreQ1 to queuine (Q), resulting in the hypermodified nucleoside queuosine (7-(((4,5-cis-dihydroxy-2-cyclopenten-1-yl)amino)methyl)-7-deazaguanosine). The polypeptide is Queuine tRNA-ribosyltransferase (Cyanothece sp. (strain PCC 7425 / ATCC 29141)).